We begin with the raw amino-acid sequence, 299 residues long: Fibrinogen silencer-binding protein (299 aa).

Lys-94 participates in a covalent cross-link: Glycyl lysine isopeptide (Lys-Gly) (interchain with G-Cter in SUMO2). Positions 189-211 (EGSESPSLSSVDMRMTSSPSSVP) are disordered. Over residues 192-209 (ESPSLSSVDMRMTSSPSS) the composition is skewed to polar residues.

As to quaternary structure, interacts with APBA1 (via PDZ 1 and 2 domains).

The protein localises to the nucleus. Functionally, transcriptional repressor that down-regulates the expression of the fibrinogen gamma chain. Represses transcription of GSK3B gene promoter via its interaction with APBA1. In Mus musculus (Mouse), this protein is Fibrinogen silencer-binding protein (Fsbp).